We begin with the raw amino-acid sequence, 321 residues long: MIFIYAIIALLITFILVPILIPTLKRMKFGQSIREEGPQSHMKKTGTPTMGGLTFLISIIISSIIAIIFVDHSNPIILLLFVTIGFGLIGFIDDYIIVVKKNNQGLTSKQKFLAQIIIAVIFFVLSDVFHLVHFTTDLHIPFVNFDIPLSFAYVIFIVFWQVGFSNAVNLTDGLDGLATGLSIIGFAMYAVMSYMLDSPAIGIFCIIMIFALLGFLPYNLNPAKVFMGDTGSLALGGIFATISIMLNQELSLILIGFVFVVETLSVMLQVASYKLTKKRIFKMSPIHHHFELSGWGEWKVVTVFWTVGLITGLIGLWIGVH.

Transmembrane regions (helical) follow at residues 1–21 (MIFI…PILI), 50–70 (MGGL…IIFV), 76–96 (IILL…DDYI), 112–132 (FLAQ…FHLV), 140–160 (IPFV…IVFW), 176–196 (GLAT…SYML), 200–220 (AIGI…PYNL), 225–245 (VFMG…ISIM), 250–270 (LSLI…MLQV), and 300–320 (VVTV…WIGV).

The protein belongs to the glycosyltransferase 4 family. MraY subfamily. Mg(2+) is required as a cofactor.

The protein localises to the cell membrane. It carries out the reaction UDP-N-acetyl-alpha-D-muramoyl-L-alanyl-gamma-D-glutamyl-L-lysyl-D-alanyl-D-alanine + di-trans,octa-cis-undecaprenyl phosphate = Mur2Ac(oyl-L-Ala-gamma-D-Glu-L-Lys-D-Ala-D-Ala)-di-trans,octa-cis-undecaprenyl diphosphate + UMP. Its pathway is cell wall biogenesis; peptidoglycan biosynthesis. Functionally, catalyzes the initial step of the lipid cycle reactions in the biosynthesis of the cell wall peptidoglycan: transfers peptidoglycan precursor phospho-MurNAc-pentapeptide from UDP-MurNAc-pentapeptide onto the lipid carrier undecaprenyl phosphate, yielding undecaprenyl-pyrophosphoryl-MurNAc-pentapeptide, known as lipid I. In Staphylococcus epidermidis (strain ATCC 12228 / FDA PCI 1200), this protein is Phospho-N-acetylmuramoyl-pentapeptide-transferase.